A 330-amino-acid chain; its full sequence is Methylthioribose-1-phosphate isomerase (330 aa).

Residues 49-51, Arg83, and Gln179 contribute to the substrate site; that span reads RGA. Asp220 (proton donor) is an active-site residue. Residue 230-231 participates in substrate binding; sequence NK.

The protein belongs to the eIF-2B alpha/beta/delta subunits family. MtnA subfamily.

The enzyme catalyses 5-(methylsulfanyl)-alpha-D-ribose 1-phosphate = 5-(methylsulfanyl)-D-ribulose 1-phosphate. The protein operates within amino-acid biosynthesis; L-methionine biosynthesis via salvage pathway; L-methionine from S-methyl-5-thio-alpha-D-ribose 1-phosphate: step 1/6. Catalyzes the interconversion of methylthioribose-1-phosphate (MTR-1-P) into methylthioribulose-1-phosphate (MTRu-1-P). The sequence is that of Methylthioribose-1-phosphate isomerase from Thermus thermophilus (strain ATCC BAA-163 / DSM 7039 / HB27).